Reading from the N-terminus, the 212-residue chain is ATP-dependent dethiobiotin synthetase BioD (212 aa).

13–18 (GVGKTV) lines the ATP pocket. Position 17 (threonine 17) interacts with Mg(2+). Lysine 33 is a catalytic residue. Mg(2+) is bound at residue glutamate 100. ATP is bound by residues 100 to 103 (EGAG) and 184 to 186 (PHL).

The protein belongs to the dethiobiotin synthetase family. Homodimer. Mg(2+) is required as a cofactor.

The protein resides in the cytoplasm. The catalysed reaction is (7R,8S)-7,8-diammoniononanoate + CO2 + ATP = (4R,5S)-dethiobiotin + ADP + phosphate + 3 H(+). It functions in the pathway cofactor biosynthesis; biotin biosynthesis; biotin from 7,8-diaminononanoate: step 1/2. In terms of biological role, catalyzes a mechanistically unusual reaction, the ATP-dependent insertion of CO2 between the N7 and N8 nitrogen atoms of 7,8-diaminopelargonic acid (DAPA, also called 7,8-diammoniononanoate) to form a ureido ring. This Rhodopseudomonas palustris (strain BisB5) protein is ATP-dependent dethiobiotin synthetase BioD.